The following is a 560-amino-acid chain: Zinc finger protein 619 (560 aa).

10 consecutive C2H2-type zinc fingers follow at residues 188-210 (YKCG…QRVH), 216-238 (YTCK…QKIH), 244-266 (YSCE…QKLH), 272-294 (YECT…QRIH), 300-322 (FKCK…ERIH), 328-350 (YECK…QRIH), 356-378 (YECK…QRFH), 384-406 (YKCN…QRIH), 412-434 (YECQ…QRVH), and 440-462 (YECK…QKWH).

The protein belongs to the krueppel C2H2-type zinc-finger protein family.

It is found in the nucleus. Functionally, may be involved in transcriptional regulation. In Homo sapiens (Human), this protein is Zinc finger protein 619 (ZNF619).